A 538-amino-acid polypeptide reads, in one-letter code: Putative cysteine ligase BshC (538 aa).

The stretch at Lys-460 to Asn-485 forms a coiled coil.

Belongs to the BshC family.

Functionally, involved in bacillithiol (BSH) biosynthesis. May catalyze the last step of the pathway, the addition of cysteine to glucosamine malate (GlcN-Mal) to generate BSH. This Bacillus cereus (strain Q1) protein is Putative cysteine ligase BshC.